Here is a 186-residue protein sequence, read N- to C-terminus: TATA box-binding protein-like 1 (186 aa).

This sequence belongs to the TBP family. In terms of assembly, binds TFIIA and TFIIB.

The protein resides in the cytoplasm. It is found in the nucleus. Its function is as follows. Part of a specialized transcription system that mediates the transcription of most ribosomal proteins through the 5'-TCT-3' motif which is a core promoter element at these genes. Seems to also mediate the transcription of NF1. Does not bind the TATA box. The polypeptide is TATA box-binding protein-like 1 (TBPL1) (Bos taurus (Bovine)).